Here is a 600-residue protein sequence, read N- to C-terminus: Putative acetyltransferase MPN_114 (600 aa).

Catalysis depends on histidine 323, which acts as the Proton acceptor. Position 396-409 (396-409) interacts with CoA; it reads TKPLIKAKGIKNSE.

Belongs to the carnitine/choline acetyltransferase family.

The chain is Putative acetyltransferase MPN_114 from Mycoplasma pneumoniae (strain ATCC 29342 / M129 / Subtype 1) (Mycoplasmoides pneumoniae).